The chain runs to 854 residues: Espin (854 aa).

ANK repeat units lie at residues 1-31 (MALE…GPSL), 35-64 (LDAL…LPAA), 69-99 (NGAT…RVQD), 103-133 (SGAT…DPTA), 137-167 (MGAL…GVNA), 171-201 (NGAT…DPHA), 205-235 (DGMT…SLSE), 239-268 (DGAT…EISA), and 271-300 (WGGT…ELDV). 2 positions are modified to phosphoserine: S338 and S342. Residues 338 to 349 (SRDPSAELEAKQ) are compositionally biased toward basic and acidic residues. Disordered regions lie at residues 338 to 400 (SRDP…CGLS), 415 to 474 (NPEL…MQTK), 487 to 713 (KELS…AGFQ), 765 to 788 (KMQE…SMPA), and 800 to 832 (EERE…TLGY). Over residues 352–377 (SGMSSPNTTVSVQPLNFDLSSPTSTL) the composition is skewed to polar residues. Residues 378-389 (SNYDSCSSSHSS) show a composition bias toward low complexity. The span at 428 to 463 (PTPPPPPPSFPPPPPPPGTQLPPPPPGYPAPKPPVG) shows a compositional bias: pro residues. Over residues 487 to 505 (KELSSCDGHDGLRRQDSSR) the composition is skewed to basic and acidic residues. Phosphoserine is present on S515. Pro residues predominate over residues 595–620 (LPPPPPPPPPPLPEAASSPPPAPPLP). The segment covering 633-642 (SSSSTGSTKS) has biased composition (low complexity). Composition is skewed to polar residues over residues 643–652 (FNMMSPTGDN) and 667–678 (PTPQSKGLTTVF). S647 carries the post-translational modification Phosphoserine. Residues 651–668 (DNSELLAEIKAGKSLKPT) enclose the WH2 domain. A phosphoserine mark is found at S690 and S696. Positions 692-703 (LPSVSPALSPVR) are enriched in low complexity. Positions 756-830 (QVMVRKMQLK…KEQSEKLRTL (75 aa)) form a coiled coil.

Monomer. Binds F-actin in a Ca(2+)-resistant fashion. Interacts (via N-terminus) with BAIAP2 (via SH3-domain). Interacts with PFN2. Interacts with MYO3A (via C-terminus). Interacts with MYO3B (via C-terminus).

It localises to the cytoplasm. The protein localises to the cytoskeleton. Its subcellular location is the cell projection. It is found in the stereocilium. The protein resides in the microvillus. Functionally, multifunctional actin-bundling protein. Plays a major role in regulating the organization, dimension, dynamics and signaling capacities of the actin filament-rich microvilli in the mechanosensory and chemosensory cells. Required for the assembly and stabilization of the stereociliary parallel actin bundles. Plays a crucial role in the formation and maintenance of inner ear hair cell stereocilia. Involved in the elongation of actin in stereocilia. In extrastriolar hair cells, required for targeting MYO3B to stereocilia tips, and for regulation of stereocilia diameter and staircase formation. This Homo sapiens (Human) protein is Espin (ESPN).